A 291-amino-acid chain; its full sequence is Diaminopimelate epimerase (291 aa).

Residues Asn-11 and Asn-78 each contribute to the substrate site. Cys-87 (proton donor) is an active-site residue. Residues Gly-88–Asn-89, Asn-166, Asn-200, and Glu-218–Arg-219 each bind substrate. The active-site Proton acceptor is the Cys-227. Residue Gly-228–Thr-229 participates in substrate binding.

Belongs to the diaminopimelate epimerase family. In terms of assembly, homodimer.

The protein localises to the cytoplasm. It catalyses the reaction (2S,6S)-2,6-diaminopimelate = meso-2,6-diaminopimelate. It participates in amino-acid biosynthesis; L-lysine biosynthesis via DAP pathway; DL-2,6-diaminopimelate from LL-2,6-diaminopimelate: step 1/1. Its function is as follows. Catalyzes the stereoinversion of LL-2,6-diaminopimelate (L,L-DAP) to meso-diaminopimelate (meso-DAP), a precursor of L-lysine and an essential component of the bacterial peptidoglycan. This is Diaminopimelate epimerase from Mycolicibacterium smegmatis (strain ATCC 700084 / mc(2)155) (Mycobacterium smegmatis).